Reading from the N-terminus, the 478-residue chain is Protein nucleotidyltransferase YdiU (478 aa).

The ATP site is built by Gly84, Gly86, Arg87, Lys107, Asp119, Gly120, Arg170, and Arg177. The Proton acceptor role is filled by Asp246. Residues Asn247 and Asp256 each coordinate Mg(2+). Residue Asp256 participates in ATP binding.

The protein belongs to the SELO family. Mg(2+) serves as cofactor. It depends on Mn(2+) as a cofactor.

The catalysed reaction is L-seryl-[protein] + ATP = 3-O-(5'-adenylyl)-L-seryl-[protein] + diphosphate. The enzyme catalyses L-threonyl-[protein] + ATP = 3-O-(5'-adenylyl)-L-threonyl-[protein] + diphosphate. It carries out the reaction L-tyrosyl-[protein] + ATP = O-(5'-adenylyl)-L-tyrosyl-[protein] + diphosphate. It catalyses the reaction L-histidyl-[protein] + UTP = N(tele)-(5'-uridylyl)-L-histidyl-[protein] + diphosphate. The catalysed reaction is L-seryl-[protein] + UTP = O-(5'-uridylyl)-L-seryl-[protein] + diphosphate. The enzyme catalyses L-tyrosyl-[protein] + UTP = O-(5'-uridylyl)-L-tyrosyl-[protein] + diphosphate. Nucleotidyltransferase involved in the post-translational modification of proteins. It can catalyze the addition of adenosine monophosphate (AMP) or uridine monophosphate (UMP) to a protein, resulting in modifications known as AMPylation and UMPylation. This Shigella boydii serotype 4 (strain Sb227) protein is Protein nucleotidyltransferase YdiU.